Here is a 95-residue protein sequence, read N- to C-terminus: Large ribosomal subunit protein bL27 (95 aa).

Positions 1–6 are excised as a propeptide; that stretch reads MFLQLF.

The protein belongs to the bacterial ribosomal protein bL27 family. In terms of processing, the N-terminus is cleaved by ribosomal processing cysteine protease Prp.

This is Large ribosomal subunit protein bL27 from Symbiobacterium thermophilum (strain DSM 24528 / JCM 14929 / IAM 14863 / T).